Here is a 122-residue protein sequence, read N- to C-terminus: Holo-[acyl-carrier-protein] synthase (122 aa).

Mg(2+) is bound by residues Asp9 and Glu58.

It belongs to the P-Pant transferase superfamily. AcpS family. The cofactor is Mg(2+).

It localises to the cytoplasm. It carries out the reaction apo-[ACP] + CoA = holo-[ACP] + adenosine 3',5'-bisphosphate + H(+). In terms of biological role, transfers the 4'-phosphopantetheine moiety from coenzyme A to a Ser of acyl-carrier-protein. The sequence is that of Holo-[acyl-carrier-protein] synthase from Chlamydia caviae (strain ATCC VR-813 / DSM 19441 / 03DC25 / GPIC) (Chlamydophila caviae).